The chain runs to 509 residues: MAEKPKKPQKLRARLPRGLADRGPAEIAATRAMVEKIREVYERYGFEPVETPAFEYTDALGKFLPDQDRPNEGVFSLQDDDEQWISLRYDLTAPLARYVAENFDQLPKPYRSYRFGWVFRNEKPGPGRFRQFMQFDADTVGSGSPAADAEMCMMAADTMEALGIPRGSYLVKLNNRKILDGVLEAIGIGGDEHIKQRLVVLRAIDKLDRLGLQGVEQLLGEGRKDESGDFTRGASLNAGQIRDVITLLNFAGWGDIVDGSNTHTLDEWEGLRFSVNSTFSAGIQDLRQITKITEASGYDTGRIRVDNTVVRGLEYYTGPVFEVELLLDTKDEKGRPVRFGSVGGGGRYDGLVSRFRGEPVPATGFSIGVSRLQAALTLIGQLGNKPQAGPVVVTVFGGEIAGYQKMVATLRKAGIRAELYLGNPKHSLGQQMKYADKRNSPCAIIQGSDEKQQGIVQIKDLILGAELASLEKDRDEYLKKQAEAQFSCKEDEMVAKVQELLQRRGVAWG.

It belongs to the class-II aminoacyl-tRNA synthetase family. As to quaternary structure, homodimer.

The protein resides in the cytoplasm. It catalyses the reaction tRNA(His) + L-histidine + ATP = L-histidyl-tRNA(His) + AMP + diphosphate + H(+). The polypeptide is Histidine--tRNA ligase (Rhodopseudomonas palustris (strain TIE-1)).